Reading from the N-terminus, the 268-residue chain is Undecaprenyl-diphosphatase (268 aa).

The next 7 membrane-spanning stretches (helical) occupy residues 47–67, 83–103, 109–129, 144–164, 184–204, 217–237, and 248–268; these read FAVL…FVKL, FVIG…AFGG, LFNP…LLWV, FPLL…IPGV, AAEF…VYDL, IIVA…VKTF, and LFAW…ALGL.

The protein belongs to the UppP family.

The protein resides in the cell inner membrane. The enzyme catalyses di-trans,octa-cis-undecaprenyl diphosphate + H2O = di-trans,octa-cis-undecaprenyl phosphate + phosphate + H(+). Its function is as follows. Catalyzes the dephosphorylation of undecaprenyl diphosphate (UPP). Confers resistance to bacitracin. This Rhodopseudomonas palustris (strain ATCC BAA-98 / CGA009) protein is Undecaprenyl-diphosphatase.